A 410-amino-acid chain; its full sequence is Acyl-CoA-binding domain-containing protein 5-B (410 aa).

In terms of domain architecture, ACB spans Ala12–Val101. An acyl-CoA contacts are provided by residues Ile23–Tyr32, Tyr43–Lys47, Lys69, and Tyr88. The segment covering Val119–Glu128 has biased composition (acidic residues). Disordered regions lie at residues Val119 to Tyr165, Ser221 to Val242, and Gly254 to Asp320. Residues Thr326–Ser355 are a coiled coil. Residues Ser382 to Leu404 are membrane-embedded.

The protein localises to the membrane. Binds medium- and long-chain acyl-CoA esters. This Danio rerio (Zebrafish) protein is Acyl-CoA-binding domain-containing protein 5-B (acbd5b).